The sequence spans 434 residues: Gamma-glutamyl phosphate reductase (434 aa).

Over residues 1-11 (MTNSNEAQENA) the composition is skewed to polar residues. A disordered region spans residues 1-26 (MTNSNEAQENALSPERQAERDEVLAK). A compositionally biased stretch (basic and acidic residues) spans 16-25 (RQAERDEVLA).

Belongs to the gamma-glutamyl phosphate reductase family.

It localises to the cytoplasm. The enzyme catalyses L-glutamate 5-semialdehyde + phosphate + NADP(+) = L-glutamyl 5-phosphate + NADPH + H(+). It participates in amino-acid biosynthesis; L-proline biosynthesis; L-glutamate 5-semialdehyde from L-glutamate: step 2/2. Its function is as follows. Catalyzes the NADPH-dependent reduction of L-glutamate 5-phosphate into L-glutamate 5-semialdehyde and phosphate. The product spontaneously undergoes cyclization to form 1-pyrroline-5-carboxylate. This is Gamma-glutamyl phosphate reductase from Corynebacterium jeikeium (strain K411).